Reading from the N-terminus, the 57-residue chain is Ribulose bisphosphate carboxylase large chain (57 aa).

The propeptide occupies 1-2 (MS). Proline 3 carries the N-acetylproline modification. Lysine 14 carries the N6,N6,N6-trimethyllysine modification.

It belongs to the RuBisCO large chain family. Type I subfamily. In terms of assembly, heterohexadecamer of 8 large chains and 8 small chains.

The protein localises to the plastid. It localises to the chloroplast. The catalysed reaction is 2 (2R)-3-phosphoglycerate + 2 H(+) = D-ribulose 1,5-bisphosphate + CO2 + H2O. It carries out the reaction D-ribulose 1,5-bisphosphate + O2 = 2-phosphoglycolate + (2R)-3-phosphoglycerate + 2 H(+). In terms of biological role, ruBisCO catalyzes two reactions: the carboxylation of D-ribulose 1,5-bisphosphate, the primary event in carbon dioxide fixation, as well as the oxidative fragmentation of the pentose substrate in the photorespiration process. Both reactions occur simultaneously and in competition at the same active site. This Buxus sempervirens (Common box) protein is Ribulose bisphosphate carboxylase large chain (rbcL).